The sequence spans 200 residues: NAD(P)H dehydrogenase (quinone) (200 aa).

The region spanning 4–191 (VLVLYYSSYG…DIARYQGKHV (188 aa)) is the Flavodoxin-like domain. FMN contacts are provided by residues 10–15 (SSYGHV) and 79–81 (TRF). Position 12 (tyrosine 12) interacts with NAD(+). Tryptophan 99 is a binding site for substrate. FMN is bound by residues 114–120 (STGTQHG) and histidine 135.

Belongs to the WrbA family. FMN is required as a cofactor.

It catalyses the reaction a quinone + NADH + H(+) = a quinol + NAD(+). It carries out the reaction a quinone + NADPH + H(+) = a quinol + NADP(+). This Burkholderia vietnamiensis (strain G4 / LMG 22486) (Burkholderia cepacia (strain R1808)) protein is NAD(P)H dehydrogenase (quinone).